We begin with the raw amino-acid sequence, 324 residues long: Endochitinase B (324 aa).

Residues 1–23 (MRLREFTALSSLLFSLLLLSASA) form the signal peptide. The Chitin-binding type-1 domain occupies 24-65 (EQCGSQAGGARCASGLCCSKFGWCGNTNDYCGPGNCQSQCPG). 4 disulfides stabilise this stretch: Cys-26/Cys-41, Cys-35/Cys-47, Cys-40/Cys-54, and Cys-59/Cys-63. A 4-hydroxyproline mark is found at Pro-67 and Pro-69. Intrachain disulfides connect Cys-96/Cys-158, Cys-170/Cys-178, and Cys-277/Cys-309. The active-site Proton donor is Glu-140. Residues 318-324 (GLLVDTM) constitute a propeptide, removed in mature form.

It belongs to the glycosyl hydrolase 19 family. Chitinase class I subfamily. The 4-hydroxyproline residues are not glycosylated in this plant vacuolar protein.

It is found in the vacuole. The catalysed reaction is Random endo-hydrolysis of N-acetyl-beta-D-glucosaminide (1-&gt;4)-beta-linkages in chitin and chitodextrins.. Its function is as follows. Defense against chitin-containing fungal pathogens. This chain is Endochitinase B (CHN50), found in Nicotiana tabacum (Common tobacco).